We begin with the raw amino-acid sequence, 228 residues long: Vesicle transport protein SEC20 (228 aa).

Topologically, residues 1 to 199 (MAAPQDVHVR…LITKYNRREL (199 aa)) are cytoplasmic. Residues 37–90 (LSELTELNTKVKEKFQQLKQRIQELEQSAREQDKESEKQLLLQEVENHKKQMLS) adopt a coiled-coil conformation. A helical; Anchor for type IV membrane protein membrane pass occupies residues 200 to 220 (TDKLLIFLALALFLATVLYIV). Topologically, residues 221–228 (KKRLFPFL) are lumenal.

It belongs to the SEC20 family. Component of a SNARE complex consisting of STX18, USE1L, BNIP1/SEC20L and SEC22B. Interacts directly with STX18, RINT1/TIP20L and NAPA. Interacts with ZW10 through RINT1. Interacts with BCL2. Interacts with RNF186. Interacts with RNF185. Interacts with SQSTM1; increased by 'Lys-63'-linked polyubiquitination of BNIP1. Polyubiquitinated. 'Lys-63'-linked polyubiquitination by RNF185 increases the interaction with the autophagy receptor SQSTM1. Undergoes 'Lys-29'- and 'Lys-63'-linked polyubiquitination by RNF186 that may regulate BNIP1 localization to the mitochondrion.

The protein localises to the endoplasmic reticulum membrane. It is found in the mitochondrion membrane. Its function is as follows. As part of a SNARE complex may be involved in endoplasmic reticulum membranes fusion and be required for the maintenance of endoplasmic reticulum organization. Also plays a role in apoptosis. It is for instance required for endoplasmic reticulum stress-induced apoptosis. As a substrate of RNF185 interacting with SQSTM1, might also be involved in mitochondrial autophagy. The protein is Vesicle transport protein SEC20 of Mus musculus (Mouse).